The sequence spans 102 residues: Ribonuclease P protein component 1 (102 aa).

Belongs to the eukaryotic/archaeal RNase P protein component 1 family. As to quaternary structure, consists of a catalytic RNA component and at least 4-5 protein subunits.

It localises to the cytoplasm. It catalyses the reaction Endonucleolytic cleavage of RNA, removing 5'-extranucleotides from tRNA precursor.. Part of ribonuclease P, a protein complex that generates mature tRNA molecules by cleaving their 5'-ends. In Archaeoglobus fulgidus (strain ATCC 49558 / DSM 4304 / JCM 9628 / NBRC 100126 / VC-16), this protein is Ribonuclease P protein component 1.